The following is a 264-amino-acid chain: MIQYQDLLERILSDGAEKHDRTGTGTLSVFGHQMRFDLAAGFPMLTTKRLPLKAIVHELLWFLQGDTNIKYLHDHGVTIWDEWADANGDLGPVYGAQWRSWPTADGGSIDQIANVVEMIKRNPDSRRLMVTAWNPADVEKMALPPCHCLFQFYVANGKLSCQLYQRSADVFLGVPFNIASYALLTLMVAQVTGLKPGEFVHTLGDAHLYSNHLEQARLQLTRAPRALPVMTINPAVKDIFGFRYEDFTLTGYDPHPHIKAEVAV.

Residues Arg21 and 126-127 (RR) each bind dUMP. Cys146 (nucleophile) is an active-site residue. DUMP-binding positions include 166–169 (RSAD), Asn177, and 207–209 (HLY). Asp169 is a (6R)-5,10-methylene-5,6,7,8-tetrahydrofolate binding site. Ala263 contributes to the (6R)-5,10-methylene-5,6,7,8-tetrahydrofolate binding site.

It belongs to the thymidylate synthase family. Bacterial-type ThyA subfamily. In terms of assembly, homodimer.

The protein resides in the cytoplasm. The catalysed reaction is dUMP + (6R)-5,10-methylene-5,6,7,8-tetrahydrofolate = 7,8-dihydrofolate + dTMP. The protein operates within pyrimidine metabolism; dTTP biosynthesis. In terms of biological role, catalyzes the reductive methylation of 2'-deoxyuridine-5'-monophosphate (dUMP) to 2'-deoxythymidine-5'-monophosphate (dTMP) while utilizing 5,10-methylenetetrahydrofolate (mTHF) as the methyl donor and reductant in the reaction, yielding dihydrofolate (DHF) as a by-product. This enzymatic reaction provides an intracellular de novo source of dTMP, an essential precursor for DNA biosynthesis. In Rhodopseudomonas palustris (strain ATCC BAA-98 / CGA009), this protein is Thymidylate synthase.